We begin with the raw amino-acid sequence, 218 residues long: Thiopurine S-methyltransferase (218 aa).

Residues Trp-10, Leu-45, Glu-66, and Arg-123 each contribute to the S-adenosyl-L-methionine site.

This sequence belongs to the class I-like SAM-binding methyltransferase superfamily. TPMT family.

It localises to the cytoplasm. The enzyme catalyses S-adenosyl-L-methionine + a thiopurine = S-adenosyl-L-homocysteine + a thiopurine S-methylether.. This Shewanella loihica (strain ATCC BAA-1088 / PV-4) protein is Thiopurine S-methyltransferase.